We begin with the raw amino-acid sequence, 227 residues long: Cytochrome c oxidase subunit 2 (227 aa).

Over 1 to 14 (MAYPFQLGLQDATS) the chain is Mitochondrial intermembrane. A helical transmembrane segment spans residues 15-45 (PIMEELMNFHDHTLMIVFLISSLVLYIISLM). Topologically, residues 46–59 (LTTKLTHTSTMDAQ) are mitochondrial matrix. Residues 60-87 (EVETIWTILPAVILILIALPSLRILYMM) form a helical membrane-spanning segment. The Mitochondrial intermembrane segment spans residues 88-227 (DEINNPVLTV…NFENWSASMI (140 aa)). Cu cation is bound by residues histidine 161, cysteine 196, glutamate 198, cysteine 200, histidine 204, and methionine 207. Glutamate 198 is a Mg(2+) binding site.

The protein belongs to the cytochrome c oxidase subunit 2 family. In terms of assembly, component of the cytochrome c oxidase (complex IV, CIV), a multisubunit enzyme composed of 14 subunits. The complex is composed of a catalytic core of 3 subunits MT-CO1, MT-CO2 and MT-CO3, encoded in the mitochondrial DNA, and 11 supernumerary subunits COX4I, COX5A, COX5B, COX6A, COX6B, COX6C, COX7A, COX7B, COX7C, COX8 and NDUFA4, which are encoded in the nuclear genome. The complex exists as a monomer or a dimer and forms supercomplexes (SCs) in the inner mitochondrial membrane with NADH-ubiquinone oxidoreductase (complex I, CI) and ubiquinol-cytochrome c oxidoreductase (cytochrome b-c1 complex, complex III, CIII), resulting in different assemblies (supercomplex SCI(1)III(2)IV(1) and megacomplex MCI(2)III(2)IV(2)). Found in a complex with TMEM177, COA6, COX18, COX20, SCO1 and SCO2. Interacts with TMEM177 in a COX20-dependent manner. Interacts with COX20. Interacts with COX16. Requires Cu cation as cofactor.

It localises to the mitochondrion inner membrane. The catalysed reaction is 4 Fe(II)-[cytochrome c] + O2 + 8 H(+)(in) = 4 Fe(III)-[cytochrome c] + 2 H2O + 4 H(+)(out). Its function is as follows. Component of the cytochrome c oxidase, the last enzyme in the mitochondrial electron transport chain which drives oxidative phosphorylation. The respiratory chain contains 3 multisubunit complexes succinate dehydrogenase (complex II, CII), ubiquinol-cytochrome c oxidoreductase (cytochrome b-c1 complex, complex III, CIII) and cytochrome c oxidase (complex IV, CIV), that cooperate to transfer electrons derived from NADH and succinate to molecular oxygen, creating an electrochemical gradient over the inner membrane that drives transmembrane transport and the ATP synthase. Cytochrome c oxidase is the component of the respiratory chain that catalyzes the reduction of oxygen to water. Electrons originating from reduced cytochrome c in the intermembrane space (IMS) are transferred via the dinuclear copper A center (CU(A)) of subunit 2 and heme A of subunit 1 to the active site in subunit 1, a binuclear center (BNC) formed by heme A3 and copper B (CU(B)). The BNC reduces molecular oxygen to 2 water molecules using 4 electrons from cytochrome c in the IMS and 4 protons from the mitochondrial matrix. The protein is Cytochrome c oxidase subunit 2 (MT-CO2) of Maxomys bartelsii (Bartels's Javan maxomys).